The primary structure comprises 503 residues: Potassium voltage-gated channel subfamily V member 1 (503 aa).

2 disordered regions span residues 1–20 (MDLS…DSGS) and 171–192 (KKDT…QGPC). Topologically, residues 3–213 (LSPRNRPLLD…EKPGSSTAAR (211 aa)) are cytoplasmic. A compositionally biased stretch (low complexity) spans 10-20 (LLDSSSLDSGS). The span at 171-184 (KKDTDDQESQHESE) shows a compositional bias: basic and acidic residues. Residues 214–234 (IFGVISIIFVAVSIVNMALMS) traverse the membrane as a helical segment. Over 235–241 (AELSWLN) the chain is Extracellular. The chain crosses the membrane as a helical span at residues 242–262 (LQLLEILEYVCISWFTGEFIL). At 263 to 279 (RFLCVKDRCHFLRKVPN) the chain is on the cytoplasmic side. Residues 280 to 300 (IIDLLAILPFYITLLVESLSG) traverse the membrane as a helical segment. Over 301–312 (SHTTQELENVGR) the chain is Extracellular. A helical; Voltage-sensor membrane pass occupies residues 313-334 (LVQVLRLLRALRMLKLGRHSTG). Residues 335–348 (LRSLGMTITQCYEE) lie on the Cytoplasmic side of the membrane. Residues 349–369 (VGLLLLFLSVGISIFSTIEYF) traverse the membrane as a helical segment. The short motif at 395–400 (TVGYGD) is the Selectivity filter element. The helical transmembrane segment at 410–430 (IVAFMCILSGILVLALPIAII) threads the bilayer. Over 431–503 (NDRFSACYFT…RSSGGDDFWF (73 aa)) the chain is Cytoplasmic.

This sequence belongs to the potassium channel family. V (TC 1.A.1.2) subfamily. Kv8.1/KCNV1 sub-subfamily. As to quaternary structure, heteromultimer with KCNB1 and KCNB2. Interacts with KCNC4 and KCND1. In terms of tissue distribution, detected in brain, in neocortex, olfactory tubercle, hippocampus, dentate gyrus, piriform cortex and amygdala. Detected in Purkinje cells and granular cells of the cerebellum, in hippocampal CA4 neurons and neocortex pyramidal cells.

Its subcellular location is the cell membrane. Its function is as follows. Potassium channel subunit that does not form functional channels by itself. Modulates KCNB1 and KCNB2 channel activity by shifting the threshold for inactivation to more negative values and by slowing the rate of inactivation. Can down-regulate the channel activity of KCNB1, KCNB2, KCNC4 and KCND1, possibly by trapping them in intracellular membranes. In Rattus norvegicus (Rat), this protein is Potassium voltage-gated channel subfamily V member 1 (Kcnv1).